A 318-amino-acid chain; its full sequence is Thioredoxin reductase (318 aa).

36–43 (TGLQQGGQ) is a binding site for FAD. C136 and C139 are joined by a disulfide. 286 to 295 (DVMDHNYRQA) provides a ligand contact to FAD.

Belongs to the class-II pyridine nucleotide-disulfide oxidoreductase family. In terms of assembly, homodimer. The cofactor is FAD.

The protein resides in the cytoplasm. The catalysed reaction is [thioredoxin]-dithiol + NADP(+) = [thioredoxin]-disulfide + NADPH + H(+). The polypeptide is Thioredoxin reductase (trxB) (Haemophilus influenzae (strain ATCC 51907 / DSM 11121 / KW20 / Rd)).